The following is a 1417-amino-acid chain: DNA-directed RNA polymerase subunit beta' (1417 aa).

Residues cysteine 71, cysteine 73, cysteine 86, and cysteine 89 each coordinate Zn(2+). Mg(2+) is bound by residues aspartate 461, aspartate 463, and aspartate 465. Residues cysteine 815, cysteine 889, cysteine 896, and cysteine 899 each contribute to the Zn(2+) site.

It belongs to the RNA polymerase beta' chain family. The RNAP catalytic core consists of 2 alpha, 1 beta, 1 beta' and 1 omega subunit. When a sigma factor is associated with the core the holoenzyme is formed, which can initiate transcription. It depends on Mg(2+) as a cofactor. The cofactor is Zn(2+).

The enzyme catalyses RNA(n) + a ribonucleoside 5'-triphosphate = RNA(n+1) + diphosphate. In terms of biological role, DNA-dependent RNA polymerase catalyzes the transcription of DNA into RNA using the four ribonucleoside triphosphates as substrates. In Pasteurella multocida (strain Pm70), this protein is DNA-directed RNA polymerase subunit beta'.